An 822-amino-acid chain; its full sequence is ATP-dependent zinc metalloprotease FtsH (822 aa).

At Met-1–Lys-76 the chain is on the cytoplasmic side. Residues Ser-44–Asn-54 show a composition bias toward polar residues. Residues Ser-44–Pro-71 are disordered. Residues Ile-77–Ser-97 form a helical membrane-spanning segment. The Extracellular portion of the chain corresponds to Gly-98–Ser-251. A helical membrane pass occupies residues Phe-252–Ile-272. Topologically, residues Tyr-273–Lys-822 are cytoplasmic. Position 347-354 (Gly-347–Thr-354) interacts with ATP. His-569 is a Zn(2+) binding site. Glu-570 is a catalytic residue. His-573 and Asp-648 together coordinate Zn(2+). A compositionally biased stretch (basic and acidic residues) spans Lys-758–Val-794. A disordered region spans residues Lys-758–Lys-822. Positions Lys-796–Thr-805 are enriched in low complexity. Residues Pro-812 to Lys-822 show a composition bias toward basic and acidic residues.

It in the central section; belongs to the AAA ATPase family. In the C-terminal section; belongs to the peptidase M41 family. Homohexamer. Zn(2+) is required as a cofactor.

The protein localises to the cell membrane. Functionally, acts as a processive, ATP-dependent zinc metallopeptidase for both cytoplasmic and membrane proteins. Plays a role in the quality control of integral membrane proteins. In Malacoplasma penetrans (strain HF-2) (Mycoplasma penetrans), this protein is ATP-dependent zinc metalloprotease FtsH.